We begin with the raw amino-acid sequence, 723 residues long: Malonamoyl-CoA synthetase vrtB (723 aa).

Belongs to the ATP-dependent AMP-binding enzyme family.

The protein operates within secondary metabolite biosynthesis; terpenoid biosynthesis. Functionally, malonamoyl-CoA synthetase; part of the gene cluster that mediates the biosynthesis of viridicatumtoxin, a tetracycline-like fungal meroterpenoid with a unique, fused spirobicyclic ring system. The first step of the pathway is the production of the malonamoyl-CoA starter unit for the polyketide synthase vrtA. The aldolase vrtJ may be involved in the synthesis of the malonamate substrate for malonamoyl-CoA synthetase vrtB. The polyketide synthase vrtA then may utilize the malonamoyl-CoA starter unit, followed by sequential condensation of eight malonyl-CoA units to form the polyketide backbone. The cyclization of the last ring could be mediated by the lactamase-like protein vrtG. The proposed post-PKS tailoring steps are a hydroxylation at C5 catalyzed the cytochrome P450 monooxygenase vrtE, a hydroxylation at C12a catalyzed by VrtH and/or VrtI, and an O-methylation by the O-methyltransferase vrtF. VrtC is then proposed to catalyze the transfer of a geranyl group synthesized by vrtD to the aromatic C ring of the tetracyclic polyketide intermediate of viridicatumtoxin to yield previridicatumtoxin. Finally, the cytochrome P450 monooxygenase vrtK catalyzes the spirocyclization of the geranyl moiety of previridicatumtoxin to afford viridicatumtoxin. This Penicillium aethiopicum protein is Malonamoyl-CoA synthetase vrtB.